The following is a 62-amino-acid chain: Disintegrin atropoimin (62 aa).

In terms of domain architecture, Disintegrin spans 1 to 62; that stretch reads EAGEECDCGT…ADCPRNGLYG (62 aa). 5 cysteine pairs are disulfide-bonded: Cys6-Cys21, Cys8-Cys16, Cys15-Cys38, Cys29-Cys35, and Cys34-Cys48. Positions 41 to 42 match the Cell attachment site motif; sequence GD.

Belongs to the venom metalloproteinase (M12B) family. P-II subfamily. P-IIa sub-subfamily. In terms of assembly, monomer. Expressed by the venom gland.

It is found in the secreted. Inhibits ADP- (IC(50)=63 nM) and collagen-induced (IC(50)=53 nM) aggregation of human platelets. In vitro, inhibits adhesion of endothelial cells to vitronectin, type-I collagen and, to a lower degree, fibronectin and laminin. This Metlapilcoatlus mexicanus (Central American jumping pitviper) protein is Disintegrin atropoimin.